The sequence spans 567 residues: Proline--tRNA ligase (567 aa).

This sequence belongs to the class-II aminoacyl-tRNA synthetase family. ProS type 1 subfamily. In terms of assembly, homodimer.

It localises to the cytoplasm. It carries out the reaction tRNA(Pro) + L-proline + ATP = L-prolyl-tRNA(Pro) + AMP + diphosphate. Functionally, catalyzes the attachment of proline to tRNA(Pro) in a two-step reaction: proline is first activated by ATP to form Pro-AMP and then transferred to the acceptor end of tRNA(Pro). As ProRS can inadvertently accommodate and process non-cognate amino acids such as alanine and cysteine, to avoid such errors it has two additional distinct editing activities against alanine. One activity is designated as 'pretransfer' editing and involves the tRNA(Pro)-independent hydrolysis of activated Ala-AMP. The other activity is designated 'posttransfer' editing and involves deacylation of mischarged Ala-tRNA(Pro). The misacylated Cys-tRNA(Pro) is not edited by ProRS. In Staphylococcus aureus (strain COL), this protein is Proline--tRNA ligase.